We begin with the raw amino-acid sequence, 213 residues long: Pyridoxine/pyridoxamine 5'-phosphate oxidase (213 aa).

Substrate-binding positions include 10-13 (REEY) and Lys68. FMN-binding positions include 63-68 (RMLLLK), 78-79 (FT), Lys85, and Gln107. The substrate site is built by Tyr125, Arg129, and Ser133. FMN is bound by residues 142 to 143 (QS) and Trp186. 192–194 (RLH) provides a ligand contact to substrate. Arg196 is an FMN binding site.

The protein belongs to the pyridoxamine 5'-phosphate oxidase family. In terms of assembly, homodimer. FMN serves as cofactor.

The enzyme catalyses pyridoxamine 5'-phosphate + O2 + H2O = pyridoxal 5'-phosphate + H2O2 + NH4(+). It catalyses the reaction pyridoxine 5'-phosphate + O2 = pyridoxal 5'-phosphate + H2O2. It participates in cofactor metabolism; pyridoxal 5'-phosphate salvage; pyridoxal 5'-phosphate from pyridoxamine 5'-phosphate: step 1/1. Its pathway is cofactor metabolism; pyridoxal 5'-phosphate salvage; pyridoxal 5'-phosphate from pyridoxine 5'-phosphate: step 1/1. Functionally, catalyzes the oxidation of either pyridoxine 5'-phosphate (PNP) or pyridoxamine 5'-phosphate (PMP) into pyridoxal 5'-phosphate (PLP). This Nocardioides sp. (strain ATCC BAA-499 / JS614) protein is Pyridoxine/pyridoxamine 5'-phosphate oxidase.